Here is a 313-residue protein sequence, read N- to C-terminus: Aspartate carbamoyltransferase catalytic subunit (313 aa).

Residues arginine 58 and threonine 59 each coordinate carbamoyl phosphate. Lysine 86 is a binding site for L-aspartate. Positions 108, 136, and 139 each coordinate carbamoyl phosphate. Positions 169 and 223 each coordinate L-aspartate. 2 residues coordinate carbamoyl phosphate: glycine 265 and proline 266.

It belongs to the aspartate/ornithine carbamoyltransferase superfamily. ATCase family. Heterododecamer (2C3:3R2) of six catalytic PyrB chains organized as two trimers (C3), and six regulatory PyrI chains organized as three dimers (R2).

The catalysed reaction is carbamoyl phosphate + L-aspartate = N-carbamoyl-L-aspartate + phosphate + H(+). Its pathway is pyrimidine metabolism; UMP biosynthesis via de novo pathway; (S)-dihydroorotate from bicarbonate: step 2/3. Functionally, catalyzes the condensation of carbamoyl phosphate and aspartate to form carbamoyl aspartate and inorganic phosphate, the committed step in the de novo pyrimidine nucleotide biosynthesis pathway. This is Aspartate carbamoyltransferase catalytic subunit from Anaeromyxobacter dehalogenans (strain 2CP-1 / ATCC BAA-258).